The following is a 156-amino-acid chain: ATP synthase subunit b (156 aa).

The chain crosses the membrane as a helical span at residues 7-29; it reads LFAQMVVFLVLAWFTMKFVWPPL.

This sequence belongs to the ATPase B chain family. F-type ATPases have 2 components, F(1) - the catalytic core - and F(0) - the membrane proton channel. F(1) has five subunits: alpha(3), beta(3), gamma(1), delta(1), epsilon(1). F(0) has three main subunits: a(1), b(2) and c(10-14). The alpha and beta chains form an alternating ring which encloses part of the gamma chain. F(1) is attached to F(0) by a central stalk formed by the gamma and epsilon chains, while a peripheral stalk is formed by the delta and b chains.

It localises to the cell inner membrane. Functionally, f(1)F(0) ATP synthase produces ATP from ADP in the presence of a proton or sodium gradient. F-type ATPases consist of two structural domains, F(1) containing the extramembraneous catalytic core and F(0) containing the membrane proton channel, linked together by a central stalk and a peripheral stalk. During catalysis, ATP synthesis in the catalytic domain of F(1) is coupled via a rotary mechanism of the central stalk subunits to proton translocation. Component of the F(0) channel, it forms part of the peripheral stalk, linking F(1) to F(0). In Burkholderia multivorans (strain ATCC 17616 / 249), this protein is ATP synthase subunit b.